The sequence spans 137 residues: Maltose regulon regulatory protein MalI (137 aa).

Positions 6–60 (VTITEVAKHAGVSVTTVSMVLGNKGRISPDTIEKVNASVEALGYIRNRAAANLRS) constitute an HTH lacI-type domain. The segment at residues 8–27 (ITEVAKHAGVSVTTVSMVLG) is a DNA-binding region (H-T-H motif).

Functionally, repressor for the malX and malY genes. This Vibrio furnissii protein is Maltose regulon regulatory protein MalI (malI).